A 390-amino-acid polypeptide reads, in one-letter code: Lipid droplet-regulating VLDL assembly factor AUP1 homolog (390 aa).

Residues 1 to 32 (MASPEASSSGNTEDLRIEDLFHQKRNEDTIAK) lie on the Cytoplasmic side of the membrane. An intramembrane segment occupies 33 to 53 (IFSIIYAPVGLIILLIRVFLG). The Cytoplasmic segment spans residues 54–390 (FHTFIVACLL…NRQKYMNRDS (337 aa)). Positions 305-347 (QMDECAMRIKQSFPSFHLSAIRRDLEKTRSQTTTVNNLKAGKI) constitute a CUE domain.

This sequence belongs to the AUP1 family.

Its subcellular location is the endoplasmic reticulum membrane. The protein localises to the lipid droplet. In Caenorhabditis elegans, this protein is Lipid droplet-regulating VLDL assembly factor AUP1 homolog.